Reading from the N-terminus, the 134-residue chain is B3 domain-containing protein At1g16640 (134 aa).

A DNA-binding region (TF-B3) is located at residues 7–100 (VQFMKPFISE…TFYVIIYGHN (94 aa)).

It localises to the nucleus. The chain is B3 domain-containing protein At1g16640 from Arabidopsis thaliana (Mouse-ear cress).